Here is a 426-residue protein sequence, read N- to C-terminus: 3-phosphoshikimate 1-carboxyvinyltransferase (426 aa).

3-phosphoshikimate-binding residues include Lys-23, Ser-24, and Arg-28. Lys-23 contributes to the phosphoenolpyruvate binding site. Phosphoenolpyruvate is bound by residues Gly-96 and Arg-124. Residues Thr-170, Ser-171, Gln-172, Ser-198, Asp-314, and Lys-341 each coordinate 3-phosphoshikimate. Residue Gln-172 participates in phosphoenolpyruvate binding. The active-site Proton acceptor is the Asp-314. Positions 345, 386, and 411 each coordinate phosphoenolpyruvate.

Belongs to the EPSP synthase family. Monomer.

It is found in the cytoplasm. It catalyses the reaction 3-phosphoshikimate + phosphoenolpyruvate = 5-O-(1-carboxyvinyl)-3-phosphoshikimate + phosphate. Its pathway is metabolic intermediate biosynthesis; chorismate biosynthesis; chorismate from D-erythrose 4-phosphate and phosphoenolpyruvate: step 6/7. In terms of biological role, catalyzes the transfer of the enolpyruvyl moiety of phosphoenolpyruvate (PEP) to the 5-hydroxyl of shikimate-3-phosphate (S3P) to produce enolpyruvyl shikimate-3-phosphate and inorganic phosphate. This Nostoc punctiforme (strain ATCC 29133 / PCC 73102) protein is 3-phosphoshikimate 1-carboxyvinyltransferase.